A 242-amino-acid polypeptide reads, in one-letter code: uncharacterized protein (242 aa).

This is an uncharacterized protein from Bacillus subtilis (strain 168).